The sequence spans 274 residues: Rhamnulose-1-phosphate aldolase (274 aa).

E117 is an active-site residue. Positions 141, 143, and 212 each coordinate Zn(2+).

Belongs to the aldolase class II family. RhaD subfamily. As to quaternary structure, homotetramer. Requires Zn(2+) as cofactor.

Its subcellular location is the cytoplasm. The catalysed reaction is L-rhamnulose 1-phosphate = (S)-lactaldehyde + dihydroxyacetone phosphate. Its pathway is carbohydrate degradation; L-rhamnose degradation; glycerone phosphate from L-rhamnose: step 3/3. In terms of biological role, catalyzes the reversible cleavage of L-rhamnulose-1-phosphate to dihydroxyacetone phosphate (DHAP) and L-lactaldehyde. The sequence is that of Rhamnulose-1-phosphate aldolase from Shigella boydii serotype 4 (strain Sb227).